We begin with the raw amino-acid sequence, 134 residues long: Putative protein KRIP1 (134 aa).

Residues 1–134 (MSPVHRSRTS…PDPALPLQML (134 aa)) are disordered. Composition is skewed to polar residues over residues 9–24 (TSQTQEAHKPTSTLSF), 43–55 (SQPNACSRQSHVS), and 64–79 (CSQSKVSPPGTATNPN). The span at 119 to 128 (PAKPALPDPA) shows a compositional bias: pro residues.

As to expression, abundant expression is found in prostate, restricted to cells of epithelial origin in normal and diseased glands. Very low expression is detected in pancreas and ovary.

It is found in the cytoplasm. It localises to the nucleus. This chain is Putative protein KRIP1 (KLKP1), found in Homo sapiens (Human).